We begin with the raw amino-acid sequence, 129 residues long: Large ribosomal subunit protein bL19c (129 aa).

Belongs to the bacterial ribosomal protein bL19 family.

It localises to the plastid. This Prototheca wickerhamii protein is Large ribosomal subunit protein bL19c.